Here is a 237-residue protein sequence, read N- to C-terminus: MADS-box protein GGM13 (237 aa).

Residues 1-61 (MGRGKIEIKR…GKLFEYSSAS (61 aa)) form the MADS-box domain. Positions 84-174 (NQHLYCEMTR…CRLLAEQQAA (91 aa)) constitute a K-box domain.

As to expression, expression specific for female reproductive structures: strong at the adaxial base of the cupules, where ovules will later develop, then in the outermost cell layer of the nucellus, in the inner envelope, and in the inner half of the middle envelope at late stage of ovule development.

It is found in the nucleus. Its function is as follows. Probable transcription factor. This is MADS-box protein GGM13 (GGM13) from Gnetum gnemon (Spanish joint-fir).